Here is a 273-residue protein sequence, read N- to C-terminus: Zinc finger protein 80 (273 aa).

C2H2-type zinc fingers lie at residues 49-71 (YKCKECGSVFNKNSLLVRHQQIH), 77-99 (YECQECGKAFPEKVDFVRHVRIH), 103-127 (KPCKCVECGKVFNRRSHLLCHHQIH), 133-155 (YECSECGRTFSYHSVFIQHRMTH), 161-183 (FGCKECGKSFYYNSSLTRHMKIH), 189-211 (YKCSECGKTFTYHSVFFRHSMTH), and 217-239 (YECKECGKGFYYSYSLTRHTRSH).

This sequence belongs to the krueppel C2H2-type zinc-finger protein family.

The protein localises to the nucleus. Functionally, may be involved in transcriptional regulation. This is Zinc finger protein 80 (ZNF80) from Pongo pygmaeus (Bornean orangutan).